We begin with the raw amino-acid sequence, 505 residues long: Probable amino-acid permease PB1C11.02 (505 aa).

Transmembrane regions (helical) follow at residues 25-45 (MLAFGGIIGTGLFLGIGSSLA), 50-70 (ASLLISFSVLGVSVYCTMLAL), 149-169 (IITPITSLSANIILNMLPVGG), 175-195 (YWLSSIKVFTVAAFIVNGILC), 221-241 (IIGVISSFVNAAFAYAGTESI), 266-286 (VLLLYIISVLVVGINLPYNTP), 305-325 (FGVPGAASIMNLVILSSALSA), 357-377 (GIPWLSVLATSATAILCLMSS), 383-403 (WGFLLNVIAVSNQISWIFIAV), 425-445 (NWTYPVGPYIIILLNGVFLFL), and 456-476 (LSLFVSYYMEIPIVLGLYLIW).

Belongs to the amino acid-polyamine-organocation (APC) superfamily.

The protein resides in the membrane. This Schizosaccharomyces pombe (strain 972 / ATCC 24843) (Fission yeast) protein is Probable amino-acid permease PB1C11.02.